The chain runs to 640 residues: EF-hand domain-containing protein 1 (640 aa).

Residues 1–45 (MVSNPVHGLPFLPGTSFKDSTKTAFHRSQTLSYRNGYAIVRRPTV) form a required for its localization in the mitotic spindle and interaction with alpha-tubulin region. DM10 domains are found at residues 93 to 198 (DKKV…ESQG), 239 to 359 (DKQV…KEKF), and 416 to 520 (DNKV…ESNA). Residues 535–554 (VRKREAPAPEAESKQTEKDP) form a disordered region. Residues 538-554 (REAPAPEAESKQTEKDP) show a composition bias toward basic and acidic residues. The region spanning 574-609 (SCKDNIREAFQIYDKEASGYVDRDMFFKICESLNVP) is the EF-hand domain.

Microtubule inner protein component of sperm flagellar doublet microtubules. Interacts with the C-terminus of CACNA1E. Interacts with alpha-tubulin. Widely expressed. Not detected in lymphocytes.

Its subcellular location is the cytoplasm. The protein resides in the cytoskeleton. It is found in the cilium axoneme. The protein localises to the flagellum axoneme. It localises to the microtubule organizing center. Its subcellular location is the centrosome. The protein resides in the spindle. It is found in the spindle pole. Its function is as follows. Microtubule inner protein (MIP) part of the dynein-decorated doublet microtubules (DMTs) in cilia axoneme, which is required for motile cilia beating. Microtubule-associated protein which regulates cell division and neuronal migration during cortical development. Necessary for radial and tangential cell migration during brain development, possibly acting as a regulator of cell morphology and process formation during migration. May enhance calcium influx through CACNA1E and stimulate programmed cell death. The chain is EF-hand domain-containing protein 1 from Homo sapiens (Human).